The primary structure comprises 872 residues: Alanine--tRNA ligase (872 aa).

Positions 563, 567, 665, and 669 each coordinate Zn(2+).

The protein belongs to the class-II aminoacyl-tRNA synthetase family. It depends on Zn(2+) as a cofactor.

The protein localises to the cytoplasm. It catalyses the reaction tRNA(Ala) + L-alanine + ATP = L-alanyl-tRNA(Ala) + AMP + diphosphate. Functionally, catalyzes the attachment of alanine to tRNA(Ala) in a two-step reaction: alanine is first activated by ATP to form Ala-AMP and then transferred to the acceptor end of tRNA(Ala). Also edits incorrectly charged Ser-tRNA(Ala) and Gly-tRNA(Ala) via its editing domain. The chain is Alanine--tRNA ligase from Bacteroides thetaiotaomicron (strain ATCC 29148 / DSM 2079 / JCM 5827 / CCUG 10774 / NCTC 10582 / VPI-5482 / E50).